A 172-amino-acid polypeptide reads, in one-letter code: Large ribosomal subunit protein uL10 (172 aa).

The protein belongs to the universal ribosomal protein uL10 family. As to quaternary structure, part of the ribosomal stalk of the 50S ribosomal subunit. The N-terminus interacts with L11 and the large rRNA to form the base of the stalk. The C-terminus forms an elongated spine to which L12 dimers bind in a sequential fashion forming a multimeric L10(L12)X complex.

Forms part of the ribosomal stalk, playing a central role in the interaction of the ribosome with GTP-bound translation factors. The sequence is that of Large ribosomal subunit protein uL10 from Chlorobium phaeobacteroides (strain DSM 266 / SMG 266 / 2430).